The chain runs to 240 residues: tRNA (guanine-N(1)-)-methyltransferase (240 aa).

S-adenosyl-L-methionine contacts are provided by residues Gly-110 and 129–134; that span reads LGDFVL.

The protein belongs to the RNA methyltransferase TrmD family. Homodimer.

The protein localises to the cytoplasm. It carries out the reaction guanosine(37) in tRNA + S-adenosyl-L-methionine = N(1)-methylguanosine(37) in tRNA + S-adenosyl-L-homocysteine + H(+). Specifically methylates guanosine-37 in various tRNAs. The sequence is that of tRNA (guanine-N(1)-)-methyltransferase from Clostridium botulinum (strain 657 / Type Ba4).